The following is a 105-amino-acid chain: Thioredoxin (105 aa).

The Thioredoxin domain occupies 2 to 105; it reads VKQIESKYAF…KLEATINELI (104 aa). At lysine 3 the chain carries N6-acetyllysine. N6-succinyllysine is present on lysine 8. Active-site nucleophile residues include cysteine 32 and cysteine 35. An intrachain disulfide couples cysteine 32 to cysteine 35. The residue at position 39 (lysine 39) is an N6-acetyllysine. S-nitrosocysteine occurs at positions 62 and 69. Cysteine 73 carries the post-translational modification S-nitrosocysteine; alternate. N6-acetyllysine; alternate is present on lysine 94. Residue lysine 94 is modified to N6-succinyllysine; alternate.

Belongs to the thioredoxin family. Homodimer; disulfide-linked. Interacts with TXNIP through the redox-active site. Interacts with MAP3K5 and CASP3. Interacts with APEX1; the interaction stimulates the FOS/JUN AP-1 DNA-binding activity in a redox-dependent manner. In terms of processing, in the fully reduced protein, both Cys-69 and Cys-73 are nitrosylated in response to nitric oxide (NO). When two disulfide bonds are present in the protein, only Cys-73 is nitrosylated. Cys-73 can serve as donor for nitrosylation of target proteins. In terms of tissue distribution, erythrocytes.

It localises to the nucleus. The protein resides in the cytoplasm. Its subcellular location is the secreted. Participates in various redox reactions through the reversible oxidation of its active center dithiol to a disulfide and catalyzes dithiol-disulfide exchange reactions. Plays a role in the reversible S-nitrosylation of cysteine residues in target proteins, and thereby contributes to the response to intracellular nitric oxide. Nitrosylates the active site Cys of CASP3 in response to nitric oxide (NO), and thereby inhibits caspase-3 activity. Induces the FOS/JUN AP-1 DNA binding activity in ionizing radiation (IR) cells through its oxidation/reduction status and stimulates AP-1 transcriptional activity. The protein is Thioredoxin (TXN) of Sus scrofa (Pig).